We begin with the raw amino-acid sequence, 1383 residues long: Palladin (1383 aa).

Disordered stretches follow at residues 1 to 22 (MSGT…EESK), 52 to 169 (DSET…SQLC), and 183 to 238 (FKAA…KSPG). Residues 78–96 (HPSHKETKLGEHASRRPQD) are compositionally biased toward basic and acidic residues. Residues 191–201 (RSPNGESSSPD) show a composition bias toward polar residues. At Ser192 the chain carries Phosphoserine. Residues 210–223 (QPSALLSASASQSP) are compositionally biased toward low complexity. Positions 271-360 (PRFIQKLRSQ…GSDTTSAEVF (90 aa)) constitute an Ig-like C2-type 1 domain. Cys292 and Cys344 are joined by a disulfide. Ser401 bears the Phosphoserine mark. The 100-residue stretch at 440 to 539 (PPVFTKELQN…ATSTAQLVVT (100 aa)) folds into the Ig-like C2-type 2 domain. A disulfide bond links Cys462 and Cys521. Residues 562-566 (FPPPP) are interaction with VASP. Disordered stretches follow at residues 609-653 (ETNG…LAKP), 673-728 (AGAR…SSGS), and 740-846 (AQNL…RFGH). At Ser632 the chain carries Phosphoserine. Thr635 is modified (phosphothreonine). The residue at position 641 (Ser641) is a Phosphoserine. Residues 646 to 676 (PPPLLAKPKLDPLKLQQLQNQIRLEQEAGAR) form an interaction with LASP1 region. The segment at 676–696 (RQPPPAPRSAPPSPPFPPPPA) is interaction with SORBS2, SPIN90 and SRC. Positions 677-697 (QPPPAPRSAPPSPPFPPPPAF) are enriched in pro residues. 3 positions are modified to phosphoserine: Ser684, Ser688, and Ser728. Residues 745 to 763 (PASGHGTPASSPSSSSLPS) are compositionally biased toward low complexity. Residues 766–831 (SPTPRQFGRA…PPPPPPLPSP (66 aa)) form an interaction with EPS8 region. The segment at 796 to 831 (SPSPPPPPPPVFSPTAAFPVPDVFPLPPPPPPLPSP) is interaction with SORBS2, SPIN90, SRC and PFN1. 2 stretches are compositionally biased toward pro residues: residues 797 to 807 (PSPPPPPPPVF) and 817 to 830 (DVFP…PLPS). An interaction with VASP region spans residues 819–823 (FPLPP). Residues 832-846 (GQASHCSSPATRFGH) show a composition bias toward polar residues. The interaction with ACTN stretch occupies residues 833–890 (QASHCSSPATRFGHSQTPAAFLSALLPSQPPPAAVNALGLPKGVTPAGFPKKASRTAR). Ser893, Ser979, and Ser984 each carry phosphoserine. One can recognise an Ig-like C2-type 3 domain in the interval 1001-1085 (PFFEMKLKHY…MAANPQGRIS (85 aa)). The interval 1096–1125 (NQRGRSPRSPSGHPHVRRPRSRSRDSGDEN) is disordered. Over residues 1098-1108 (RGRSPRSPSGH) the composition is skewed to low complexity. Ser1101, Ser1104, Ser1106, and Ser1116 each carry phosphoserine. Phosphoserine; by PKB/AKT1 is present on Ser1118. A Phosphoserine modification is found at Ser1121. 2 Ig-like C2-type domains span residues 1135 to 1226 (PHFL…LVVA) and 1233 to 1324 (PPVF…ARLD). 2 interaction with EZR regions span residues 1137–1226 (FLQA…LVVA) and 1236–1326 (FIEK…LDVY). A disulfide bond links Cys1156 and Cys1208. Residue Ser1352 is modified to Phosphoserine.

Belongs to the myotilin/palladin family. In terms of assembly, interacts with EPS8. Interacts with LASP1. Interacts with VASP. Interacts with ACTN. Interacts with SORBS2. Interacts with PFN1. Interacts with LPP. Interacts with SPIN90. Interacts with SRC. Interacts with EZR. Interacts with RAI14. Phosphorylated predominantly on serines and, to a lesser extent, on tyrosines. Phosphorylation at Ser-1118 by PKB/AKT1 modulates cytoskeletal organization and cell motility. Detected in both muscle and non-muscle tissues. High expression in prostate, ovary, colon, and kidney. Not detected in spleen, skeletal muscle, lung and peripheral blood lymphocytes (at protein level). Protein is overexpressed in FA6, HPAF, IMIM-PC2, SUIT-2 and PancTu-II sporadic pancreatic cancer cell lines.

It is found in the cytoplasm. It localises to the cytoskeleton. The protein resides in the cell junction. The protein localises to the focal adhesion. Its subcellular location is the myofibril. It is found in the sarcomere. It localises to the z line. The protein resides in the cell projection. The protein localises to the ruffle. Its subcellular location is the podosome. It is found in the lamellipodium. It localises to the axon. The protein resides in the growth cone. In terms of biological role, cytoskeletal protein required for organization of normal actin cytoskeleton. Roles in establishing cell morphology, motility, cell adhesion and cell-extracellular matrix interactions in a variety of cell types. May function as a scaffolding molecule with the potential to influence both actin polymerization and the assembly of existing actin filaments into higher-order arrays. Binds to proteins that bind to either monomeric or filamentous actin. Localizes at sites where active actin remodeling takes place, such as lamellipodia and membrane ruffles. Different isoforms may have functional differences. Involved in the control of morphological and cytoskeletal changes associated with dendritic cell maturation. Involved in targeting ACTN to specific subcellular foci. The chain is Palladin (PALLD) from Homo sapiens (Human).